The primary structure comprises 176 residues: Protein Dr1 (176 aa).

An N-acetylalanine modification is found at alanine 2. The Histone-fold domain occupies 12 to 75 (TIPRAAINKM…ISPEHVIQAL (64 aa)). The short motif at 100–103 (KRRK) is the Nuclear localization signal element. 4 positions are modified to phosphoserine: serine 105, serine 106, serine 166, and serine 167. The segment covering 152–167 (QLAAASASASNQAGSS) has biased composition (low complexity). A disordered region spans residues 152–176 (QLAAASASASNQAGSSQDEEDDDDI).

The protein belongs to the NC2 beta/DR1 family. Heterodimer with DRAP1. DR1 exists in solution as a homotetramer that dissociates during interaction with TBP and then, after complexing with TBP, reassociates at a slow rate, to reconstitute the tetramer. Interacts with NFIL3. Component of the ADA2A-containing complex (ATAC), composed of KAT14, KAT2A, TADA2L, TADA3L, ZZ3, MBIP, WDR5, YEATS2, CCDC101 and DR1. In terms of processing, phosphorylation regulates its interaction with TBP. Not phosphorylated when bound to DRAP1.

It is found in the nucleus. In terms of biological role, the association of the DR1/DRAP1 heterodimer with TBP results in a functional repression of both activated and basal transcription of class II genes. This interaction precludes the formation of a transcription-competent complex by inhibiting the association of TFIIA and/or TFIIB with TBP. Can bind to DNA on its own. Component of the ATAC complex, a complex with histone acetyltransferase activity on histones H3 and H4. This Homo sapiens (Human) protein is Protein Dr1 (DR1).